Consider the following 189-residue polypeptide: Large ribosomal subunit protein uL5 (189 aa).

The protein belongs to the universal ribosomal protein uL5 family. As to quaternary structure, part of the 50S ribosomal subunit; part of the 5S rRNA/L5/L18/L25 subcomplex. Contacts the 5S rRNA and the P site tRNA. Forms a bridge to the 30S subunit in the 70S ribosome.

This is one of the proteins that bind and probably mediate the attachment of the 5S RNA into the large ribosomal subunit, where it forms part of the central protuberance. In the 70S ribosome it contacts protein S13 of the 30S subunit (bridge B1b), connecting the 2 subunits; this bridge is implicated in subunit movement. Contacts the P site tRNA; the 5S rRNA and some of its associated proteins might help stabilize positioning of ribosome-bound tRNAs. The sequence is that of Large ribosomal subunit protein uL5 from Salinispora tropica (strain ATCC BAA-916 / DSM 44818 / JCM 13857 / NBRC 105044 / CNB-440).